The chain runs to 1758 residues: Y' element ATP-dependent helicase YJL225C (1758 aa).

The Helicase ATP-binding domain maps to 668-845 (EIYMADTPSV…LQRIGLTGLA (178 aa)). Residue 681-688 (APPGYGKT) coordinates ATP. One can recognise a Helicase C-terminal domain in the interval 900 to 1051 (ALKLLLALFE…EFYGLESKKG (152 aa)). The segment covering 1142 to 1360 (NVRTNATTNA…ATTTESTNAS (219 aa)) has biased composition (low complexity). The tract at residues 1142–1384 (NVRTNATTNA…RFHPVTDINK (243 aa)) is disordered. Residues 1361 to 1384 (AKEDANKDGNAEDNRFHPVTDINK) are compositionally biased toward basic and acidic residues.

It belongs to the helicase family. Yeast subtelomeric Y' repeat subfamily.

In terms of biological role, catalyzes DNA unwinding and is involved in telomerase-independent telomere maintenance. The protein is Y' element ATP-dependent helicase YJL225C of Saccharomyces cerevisiae (strain ATCC 204508 / S288c) (Baker's yeast).